The chain runs to 253 residues: CD151 antigen (253 aa).

Residues 1–18 (MGEFNEKKTTCGTVCLKY) are Cytoplasmic-facing. S-palmitoyl cysteine attachment occurs at residues C11 and C15. Residues 19–39 (LLFTYNCCFWLAGLAVMAVGI) form a helical membrane-spanning segment. At 40-57 (WTLALKSDYISLLASGTY) the chain is on the extracellular side. The chain crosses the membrane as a helical span at residues 58–78 (LATAYILVVAGTVVMVTGVLG). Over 79-91 (CCATFKERRNLLR) the chain is Cytoplasmic. The chain crosses the membrane as a helical span at residues 92-112 (LYFILLLIIFLLEIIAGILAY). Over 113-221 (AYYQQLNTEL…LETFIQEHLR (109 aa)) the chain is Extracellular. N159 carries an N-linked (GlcNAc...) asparagine glycan. The chain crosses the membrane as a helical span at residues 222–242 (VIGAVGIGIACVQVFGMIFTC). S-palmitoyl cysteine attachment occurs at residues C242 and C243. Residues 243-253 (CLYRSLKLEHY) lie on the Cytoplasmic side of the membrane.

Belongs to the tetraspanin (TM4SF) family. As to quaternary structure, interacts with integrins ITGA3:ITGB1, ITGA5:ITGB1, ITGA3:ITGB1 and ITGA6:ITGB4 and with CD9 and CD181. Interacts (via the second extracellular domain) with integrin ITGAV:ITGB3. Interacts with ITGA3; this interaction modulates ITGA3 glycosylation pattern. Interacts with F11R. Interacts with RAC1 and CDC42; these interactions mediate physical association of RAC1 and CDC42 with integrin adhesion receptor complexes. Post-translationally, palmitoylated. Palmitoylation by ZDHHC2 regulates CD151 expression, association with other tetraspanin family proteins and function in cell adhesion. In terms of processing, ubiquitinated by RNF128 on lysine residues present in the tetraspanin amino terminus via 'Lys-48'-linked ubiquitin leading to proteasomal degradation. In terms of tissue distribution, expressed in a variety of tissues including vascular endothelium and epidermis. Expressed on erythroid cells, with a higher level of expression in erythroid precursors than on mature erythrocytes. Acts as a sensitive T-cell activation marker.

It is found in the cell membrane. Structural component of specialized membrane microdomains known as tetraspanin-enriched microdomains (TERMs), which act as platforms for receptor clustering and signaling. Plays a role in various cellular and molecular mechanism through its association with both integrin and non-integrin proteins. These interactions facilitate critical cellular functions, including cell-to-cell communication, wound healing, platelet aggregation, trafficking, cell motility, and angiogenesis. Via interaction with JAM-A/F11R and integrin ITGA3:ITGB1, promotes the recruitment of signaling molecules such as RAC1, CDC42 and RhoGTPases to facilitate the polarization of epithelial cells and the reorganization of the actin cytoskeleton, which are critical steps in cell migration process. Regulates the glycosylation pattern of ITGA3:ITGB1 thereby modulating its activity. Plays an essential role in the maintenance of central laminin-binding integrin ITGA6:ITGB4-containing adhesion complexes. Essential for the proper assembly of the glomerular and tubular basement membranes in kidney. Contributes to T-cell activation by modulating integrin signaling leading to activation of downstream targets PTK2 and MAPK1/MAPK3. Functionally, (Microbial infection) Plays a role in human papillomavirus 16/HPV-16 endocytosis upon binding to cell surface receptor. Its function is as follows. (Microbial infection) Plays a role in human cytomegalovirus entry into host cell by contributing to entry receptor binding, membrane fusion, or release of the capsid. In Homo sapiens (Human), this protein is CD151 antigen (CD151).